The following is a 394-amino-acid chain: Phosphoglycerate kinase (394 aa).

Substrate is bound by residues 21–23, Arg36, 60–63, Arg114, and Arg147; these read DLN and HLGN. Residues Lys198, Glu315, and 341-344 contribute to the ATP site; that span reads GGET.

This sequence belongs to the phosphoglycerate kinase family. In terms of assembly, monomer.

The protein localises to the cytoplasm. It catalyses the reaction (2R)-3-phosphoglycerate + ATP = (2R)-3-phospho-glyceroyl phosphate + ADP. The protein operates within carbohydrate degradation; glycolysis; pyruvate from D-glyceraldehyde 3-phosphate: step 2/5. This chain is Phosphoglycerate kinase, found in Wigglesworthia glossinidia brevipalpis.